We begin with the raw amino-acid sequence, 313 residues long: Porphobilinogen deaminase (313 aa).

Cysteine 242 carries the post-translational modification S-(dipyrrolylmethanemethyl)cysteine.

This sequence belongs to the HMBS family. As to quaternary structure, monomer. It depends on dipyrromethane as a cofactor.

The catalysed reaction is 4 porphobilinogen + H2O = hydroxymethylbilane + 4 NH4(+). The protein operates within porphyrin-containing compound metabolism; protoporphyrin-IX biosynthesis; coproporphyrinogen-III from 5-aminolevulinate: step 2/4. Functionally, tetrapolymerization of the monopyrrole PBG into the hydroxymethylbilane pre-uroporphyrinogen in several discrete steps. The sequence is that of Porphobilinogen deaminase from Pseudomonas putida (strain GB-1).